The sequence spans 960 residues: Chromosome transmission fidelity protein 18 (960 aa).

Disordered stretches follow at residues 56-79 (DLFHSSQPVGSPTRNGDDIPSTLD) and 91-113 (DISEDETINQRHAPQTDYRYPNT). Polar residues predominate over residues 58–69 (FHSSQPVGSPTR). An ATP-binding site is contributed by 423 to 430 (GLAGAGKT).

Belongs to the activator 1 small subunits family. CTF18 subfamily. In terms of assembly, component of the ctf18-RFC complex which consists of ctf18, ctf8, dcc1, rfc2, rfc3, rfc4 and rfc5.

The protein localises to the nucleus. Functionally, essential for the fidelity of chromosome transmission. Required for the DNA replication block checkpoint. Replication factor C (RFC) complex has an essential but redundant activity in sister chromatid cohesion establishment. Acts as a PCNA loader, loading PCNA onto primed templates. An RFC-like complex (ctf18-RFC) is formed where ctf18 replaces rfc1 in the RFC complex along with the association of dcc1 and ctf8. This complex is required for efficient establishment of chromosome cohesion during S-phase. This is Chromosome transmission fidelity protein 18 (ctf18) from Schizosaccharomyces pombe (strain 972 / ATCC 24843) (Fission yeast).